The chain runs to 154 residues: Transcriptional repressor NrdR (154 aa).

The interval 1–22 (MRCPFCGNDDTQVKDSRPTEDN) is disordered. The segment at 3–34 (CPFCGNDDTQVKDSRPTEDNSAIRRRRFCPAC) is a zinc-finger region. Residues 11 to 22 (TQVKDSRPTEDN) are compositionally biased toward basic and acidic residues. One can recognise an ATP-cone domain in the interval 49–139 (LTVVKSGGSR…VYKDFREVTD (91 aa)).

Belongs to the NrdR family. Requires Zn(2+) as cofactor.

Negatively regulates transcription of bacterial ribonucleotide reductase nrd genes and operons by binding to NrdR-boxes. This Rhodospirillum centenum (strain ATCC 51521 / SW) protein is Transcriptional repressor NrdR.